Reading from the N-terminus, the 567-residue chain is MRSSKYLLSTLKETPSDAEIVSHQLMLRAGMIRKVAAGLYTWTPTGLRVLRKVENVVREEMEAINALEILMPMVQPADLWQESGRWDDYGPELLRIKDRNQRDFLLGPTHEEIISQLVRKEVSSYKQLPLTLFQIQTKFRDEIRPRFGVMRAREFLMKDAYSFHLTDESLQKTYDDMYKAYCRIFERLGLDYRPVIADTGSIGGSHSHEFHVLASSGEDAIAFSDSSDYAANVEMAEALAPAGERPAPNQKVEKHEVQGDELAAVLQPLSVESQQATKSFIVKAADDIDSEYVQLVLRADHELNTVKAEKLAQVAAPLEILTETEKATGVEAPYIGVVNAKLPLLVDSSAAHLADFACGANENGQWLTGVNWKRDTGDFSVVDIRNVVAGDPSPCGQGKVKIARGIEVGHIFQLGKKYSDAMKVGVLSESGKHETLTMGCYGIGVSRIVAAAIEQNNDERGICWPEALAPFQVVIVPMNMHKSARVQEAAEKLYTDLKAQGIDVLFDDRKERPGVMFTDMELIGIPHQVVVGERNLDENQVEYQSRKGGEKQKINLDDCISFIQQQL.

It belongs to the class-II aminoacyl-tRNA synthetase family. ProS type 1 subfamily. As to quaternary structure, homodimer.

It is found in the cytoplasm. It carries out the reaction tRNA(Pro) + L-proline + ATP = L-prolyl-tRNA(Pro) + AMP + diphosphate. Functionally, catalyzes the attachment of proline to tRNA(Pro) in a two-step reaction: proline is first activated by ATP to form Pro-AMP and then transferred to the acceptor end of tRNA(Pro). As ProRS can inadvertently accommodate and process non-cognate amino acids such as alanine and cysteine, to avoid such errors it has two additional distinct editing activities against alanine. One activity is designated as 'pretransfer' editing and involves the tRNA(Pro)-independent hydrolysis of activated Ala-AMP. The other activity is designated 'posttransfer' editing and involves deacylation of mischarged Ala-tRNA(Pro). The misacylated Cys-tRNA(Pro) is not edited by ProRS. This is Proline--tRNA ligase from Idiomarina loihiensis (strain ATCC BAA-735 / DSM 15497 / L2-TR).